Here is a 499-residue protein sequence, read N- to C-terminus: uncharacterized protein (499 aa).

This is an uncharacterized protein from Methanothermobacter thermautotrophicus (Methanobacterium thermoformicicum).